The sequence spans 1470 residues: ABC transporter G family member 48 (1470 aa).

The tract at residues 1–47 is disordered; the sequence is MAAAPSASGRRSMSWGSSISQSFRQAEADDPFGRAASQQGHDDDEEN. Residues 9–24 are compositionally biased toward polar residues; it reads GRRSMSWGSSISQSFR. Residues 172–445 enclose the ABC transporter 1 domain; sequence GLIGRFGSSN…FENAGFRCPE (274 aa). 205 to 212 lines the ATP pocket; sequence GPPSSGKS. The ABC transmembrane type-2 1 domain occupies 523–736; it reads ESLRAVMSRE…SQQAISINEF (214 aa). 6 helical membrane-spanning segments follow: residues 541–561, 577–597, 629–649, 660–680, 686–706, and 772–792; these read FIYI…MTVF, FLGA…AELQ, VPVS…VMGF, FIAF…LGAI, VANT…GFLI, and FWIS…LYIL. The interval 828 to 852 is disordered; it reads QIVHNNGASNTSATSSIPMSGSRST. Low complexity predominate over residues 832–843; sequence NNGASNTSATSS. In terms of domain architecture, ABC transporter 2 spans 869–1121; sequence LCFNHVNYYV…KLVEYFEAVP (253 aa). ATP is bound at residue 914-921; sequence GVSGAGKT. An ABC transmembrane type-2 2 domain is found at 1194 to 1408; the sequence is SQCIANFWKQ…TIYGVVASQF (215 aa). The next 7 helical transmembrane spans lie at 1215–1234, 1249–1271, 1301–1321, 1331–1351, 1359–1379, 1389–1409, and 1439–1459; these read AMRY…VFWQ, LGAT…QPVV, VIYN…MIGY, FMFF…MLVA, ANIL…FLVV, WYYW…SQFG, and FLGY…FIFG.

The protein belongs to the ABC transporter superfamily. ABCG family. PDR (TC 3.A.1.205) subfamily.

The protein resides in the membrane. Its function is as follows. May be a general defense protein. The polypeptide is ABC transporter G family member 48 (Oryza sativa subsp. japonica (Rice)).